A 135-amino-acid polypeptide reads, in one-letter code: MPPKSRTATASRKPRRKEKKNVAHGHAHIKSTFNNTIVSITDPTGAVIAWASAGQVGFKGSRKSTPFAAQMAAEAAARRAQEHGMRKVDVFVKGPGSGRETAIRSLQATGLEVGAIQDVTPSPHNGCRPPKRRRV.

The span at 1–10 (MPPKSRTATA) shows a compositional bias: polar residues. Disordered stretches follow at residues 1–27 (MPPK…HGHA) and 114–135 (GAIQ…RRRV). Residues 12-27 (RKPRRKEKKNVAHGHA) show a composition bias toward basic residues.

Belongs to the universal ribosomal protein uS11 family. In terms of assembly, part of the 30S ribosomal subunit. Interacts with proteins S7 and S18. Binds to IF-3.

Located on the platform of the 30S subunit, it bridges several disparate RNA helices of the 16S rRNA. Forms part of the Shine-Dalgarno cleft in the 70S ribosome. The sequence is that of Small ribosomal subunit protein uS11 from Kineococcus radiotolerans (strain ATCC BAA-149 / DSM 14245 / SRS30216).